The sequence spans 864 residues: MYMARCGPKNNVLCFPFQLSFLFSKRLINKRFKYTLQTEDEKDMMGSLSKNKIITPEDVEFKLAQLREFSNTLKERIHNTKSVNSDGHQSNSIAPISEDSRNVNVTKISSVPNEEKSKNLSDLIHSSFLEKMDHLVPKVIRERVADDDILAKNLFDRSHSNWAPVIDRLYVSEKRFMDIDSREFSVWLNGTVKYLPFHSILHLDEMLLEQINGDVVKFNTHMYECIFNNLGNLKPTNFNQDGTNDKVILKMKELLERYDKALKITEERINKKEGFPSKVPKMTQAILNNCLKYSTKCSSFHDMDYFITKFRDDYGITPNKQNLTTVIQFYSRKEMTKQAWNTFDTMKFLSTKHFPDICTYNTMLRICEKERNFPKALDLFQEIQDHNIKPTTNTYIMMARVLASSSSNAVVSEGKSDSLRLLGWKYLHELEDKNLYRHKKDDLNLFLAMMVLAAFDGDIELSRALYYLFIAKKYKTLCANWKGNILVDQDTIWKSTLMPEMLNYLMLAYARFDPRNLPVLSGYEKGIELRRKFLREFDSSMRLDDTDKLVKFKLPFLPISDLNSEAQVLAESNAIWSFNLENGGTRNTLTSSNEAALEDIKKYRQLLDSFAQEAEDFNEFKFKVMYEVTKMQRESINVNVFNKISLHTYLSIPINLKQQKEFLRRLTFFTFQQHEFEAVIKRLYEGYRNIPSSHTRDQNSISTEAISVSKPETTEDLNLIMHDIWYITCLRHKIMMDTTLYELVMKAAIEFQNEDLAKKVWNDRGKFRTTVPFLKMDQRIRIAKDQKFAHLMVEFFTKQGKYSDAIAIILSSKNRFNWTYSMVRNLHKALEEIEDRNSVEILLDVVNKKSHAKALKWEEQELNM.

The transit peptide at 1–76 directs the protein to the mitochondrion; sequence MYMARCGPKN…REFSNTLKER (76 aa). 2 PPR repeats span residues 319–353 and 356–390; these read NKQN…STKH and DICT…NIKP.

It belongs to the CCM1 family. Binds to mitochondrial small subunit 15S rRNA.

The protein localises to the mitochondrion. Regulates mitochondrial small subunit maturation by controlling 15S rRNA 5'-end processing. Localizes to the 5' precursor of the 15S rRNA in a position that is subsequently occupied by mS47 in the mature yeast mtSSU. Uses structure and sequence-specific RNA recognition, binding to a single-stranded region of the precursor and specifically recognizing bases -6 to -1. The exchange of Ccm1 for mS47 is coupled to the irreversible removal of precursor rRNA that is accompanied by conformational changes of the mitoribosomal proteins uS5m and mS26. These conformational changes signal completion of 5'-end rRNA processing through protection of the mature 5'-end of the 15S rRNA and stabilization of mS47. The removal of the 5' precursor together with the dissociation of Ccm1 may be catalyzed by the 5'-3' exoribonuclease Pet127. Involved in the specific removal of group I introns in mitochondrial encoded transcripts. The protein is Mitochondrial 15S rRNA processing factor CCM1 (CCM1) of Saccharomyces cerevisiae (strain YJM789) (Baker's yeast).